The primary structure comprises 456 residues: Transcription factor bHLH62 (456 aa).

Residues 159–185 are compositionally biased toward polar residues; that stretch reads RTNSPFPINNEPPITTNEKMPRVSSSP. Residues 159–254 form a disordered region; the sequence is RTNSPFPINN…KTKSIDPYKD (96 aa). Residues 223–254 are compositionally biased toward basic and acidic residues; it reads KEIEEKEDSDPKRCKKSEENGDKTKSIDPYKD. One can recognise a bHLH domain in the interval 264–314; that stretch reads QATDSHSLAERVRREKISERMKLLQDLVPGCNKVTGKALMLDEIINYVQSL.

As to quaternary structure, homodimer. In terms of tissue distribution, expressed constitutively in roots, leaves, stems, and flowers.

Its subcellular location is the nucleus. The protein is Transcription factor bHLH62 (BHLH62) of Arabidopsis thaliana (Mouse-ear cress).